A 331-amino-acid chain; its full sequence is Protein MGF 300-4L (331 aa).

Belongs to the asfivirus MGF 300 family.

The protein is Protein MGF 300-4L of African swine fever virus (isolate Tick/Malawi/Lil 20-1/1983) (ASFV).